A 522-amino-acid polypeptide reads, in one-letter code: MSELIMYILATAVVSIGVGIVAGKAIFQKDFSKQETEAKEKANLIIKEAELKAEATKKDKQLEAKEHFLKLKTEFEEDSNKKKNLIIQNEQKIKQREQTISKQMETNTRREAELDSLRENLSSQLEILNKRKEELEKLRHSQIEKLEKIAGLTGEEAKAQLMDTIKEEARTEASSYIKRITDEAKMTATKDAKKIVIETLQRTATENAVENCVSIFNIESDDIKGKIIGREGRNIRALEAATGVEIIVDDTPEAIIISGFDPVRREVARLSLHRLVQDGRIHPARIEEVVTKTAKHLDEEIIEIGERTAIDLGIHGLHPELIRLVGRMRFRSSYGQNLLQHSREVAKLCATMASELGLNAKVAKRAGLLHDIGKVYPDEPELPHAILGMELAKKYKESAEICNAIGAHHDEIEMTGLISPIVQVCDAISGARPGARREVMEQYIKRLKDLEQLALSFDGVLKCYAIQAGRELRIMVDAENVSDDKAGILSFDIAQKIEKEMQYPGQIKVTVIREMRAVNFAK.

Residues 3-23 (ELIMYILATAVVSIGVGIVAG) traverse the membrane as a helical segment. A KH domain is found at 212-272 (CVSIFNIESD…VRREVARLSL (61 aa)). In terms of domain architecture, HD spans 338–431 (LLQHSREVAK…VQVCDAISGA (94 aa)).

The protein belongs to the RNase Y family.

The protein resides in the cell membrane. In terms of biological role, endoribonuclease that initiates mRNA decay. The protein is Ribonuclease Y of Cytophaga hutchinsonii (strain ATCC 33406 / DSM 1761 / CIP 103989 / NBRC 15051 / NCIMB 9469 / D465).